A 185-amino-acid chain; its full sequence is Ribosome-recycling factor (185 aa).

The protein belongs to the RRF family.

Its subcellular location is the cytoplasm. Its function is as follows. Responsible for the release of ribosomes from messenger RNA at the termination of protein biosynthesis. May increase the efficiency of translation by recycling ribosomes from one round of translation to another. This Ectopseudomonas mendocina (strain ymp) (Pseudomonas mendocina) protein is Ribosome-recycling factor.